The sequence spans 286 residues: Pyridoxal kinase PdxY (286 aa).

Substrate is bound by residues serine 9 and 44-45 (TQ). ATP is bound by residues aspartate 111, alanine 143, glutamate 148, lysine 181, and 208–211 (RPLV). Aspartate 223 is a binding site for substrate.

The protein belongs to the pyridoxine kinase family. PdxY subfamily. As to quaternary structure, homodimer. Mg(2+) serves as cofactor.

The catalysed reaction is pyridoxal + ATP = pyridoxal 5'-phosphate + ADP + H(+). It functions in the pathway cofactor metabolism; pyridoxal 5'-phosphate salvage; pyridoxal 5'-phosphate from pyridoxal: step 1/1. Its function is as follows. Pyridoxal kinase involved in the salvage pathway of pyridoxal 5'-phosphate (PLP). Catalyzes the phosphorylation of pyridoxal to PLP. The polypeptide is Pyridoxal kinase PdxY (Salmonella choleraesuis (strain SC-B67)).